The chain runs to 322 residues: Ribosome biogenesis protein RLP7 (322 aa).

Positions 1–16 (MSSTQDSKAQTLNSNP) are enriched in polar residues. The segment at 1-52 (MSSTQDSKAQTLNSNPEILLRKRRNADRTRIERQELAKKKREEQIKKKRSNK) is disordered. N-acetylserine is present on S2. S14 bears the Phosphoserine mark. A compositionally biased stretch (basic and acidic residues) spans 26–45 (ADRTRIERQELAKKKREEQI). T120 is subject to Phosphothreonine. S278 carries the phosphoserine modification.

It belongs to the universal ribosomal protein uL30 family.

It is found in the nucleus. The protein resides in the nucleolus. Its function is as follows. Involved in the biogenesis of the 60S ribosomal subunit. May act as a specificity factor that binds precursor rRNAs and tethers the enzymes that carry out the early 5' to 3' exonucleolytic reactions that generate the mature rRNAs. The chain is Ribosome biogenesis protein RLP7 (RLP7) from Saccharomyces cerevisiae (strain ATCC 204508 / S288c) (Baker's yeast).